Consider the following 150-residue polypeptide: Large ribosomal subunit protein bL9 (150 aa).

The protein belongs to the bacterial ribosomal protein bL9 family.

Functionally, binds to the 23S rRNA. The protein is Large ribosomal subunit protein bL9 of Corynebacterium aurimucosum (strain ATCC 700975 / DSM 44827 / CIP 107346 / CN-1) (Corynebacterium nigricans).